The following is a 525-amino-acid chain: GMP synthase [glutamine-hydrolyzing] (525 aa).

Residues Pro16–Asp205 enclose the Glutamine amidotransferase type-1 domain. Cys93 (nucleophile) is an active-site residue. Active-site residues include His179 and Glu181. In terms of domain architecture, GMPS ATP-PPase spans Trp206–Arg399. Ser233 to Ala239 contributes to the ATP binding site.

In terms of assembly, homodimer.

The catalysed reaction is XMP + L-glutamine + ATP + H2O = GMP + L-glutamate + AMP + diphosphate + 2 H(+). It participates in purine metabolism; GMP biosynthesis; GMP from XMP (L-Gln route): step 1/1. Functionally, catalyzes the synthesis of GMP from XMP. This Mycolicibacterium paratuberculosis (strain ATCC BAA-968 / K-10) (Mycobacterium paratuberculosis) protein is GMP synthase [glutamine-hydrolyzing].